A 436-amino-acid polypeptide reads, in one-letter code: 5-hydroxytryptamine receptor 6 (436 aa).

At 1 to 27 (MVPEPGPVNSSTPAWGPGPPPAPGGSG) the chain is on the extracellular side. An N-linked (GlcNAc...) asparagine glycan is attached at N9. The chain crosses the membrane as a helical span at residues 28-52 (WVAAALCVVIVLTAAANSLLIVLIC). The Cytoplasmic segment spans residues 53–62 (TQPALRNTSN). The helical transmembrane segment at 63–88 (FFLVSLFTSDLMVGLVVMPPAMLNAL) threads the bilayer. The Extracellular portion of the chain corresponds to 89-96 (YGRWVLAR). The helical transmembrane segment at 97–122 (GLCLLWTAFDVMCCSASILNLCLISL) threads the bilayer. A disulfide bridge links C99 with C180. Residue D106 coordinates serotonin. Residues 123-142 (DRYLLILSPLRYKLRMTAPR) lie on the Cytoplasmic side of the membrane. The helical transmembrane segment at 143–167 (ALALILGAWSLAALASFLPLLLGWH) threads the bilayer. The Extracellular portion of the chain corresponds to 168 to 185 (ELGKARTPAPGQCRLLAS). A helical transmembrane segment spans residues 186-209 (LPFVLVASGVTFFLPSGAICFTYC). At 210–266 (RILLAARKQAVQVASLTTGTAGQALETLQVPRTPRPGMESADSRRLATKHSRKALKA) the chain is on the cytoplasmic side. A helical membrane pass occupies residues 267–293 (SLTLGILLGMFFVTWLPFFVANIAQAV). N288 is a binding site for serotonin. Topologically, residues 294–299 (CDCISP) are extracellular. The chain crosses the membrane as a helical span at residues 300–323 (GLFDVLTWLGYCNSTMNPIIYPLF). Residues 324–436 (MRDFKRALGR…RYGRIHSVPP (113 aa)) lie on the Cytoplasmic side of the membrane.

The protein belongs to the G-protein coupled receptor 1 family. As to quaternary structure, interacts with MTOR, RPTOR and NF1. Interacts with CDK5. As to expression, localized exclusively in the central nervous system, predominantly in the corpus striatum but also in various limbic and cortical regions.

The protein resides in the cell membrane. G-protein coupled receptor for 5-hydroxytryptamine (serotonin), a biogenic hormone that functions as a neurotransmitter, a hormone and a mitogen. Also has a high affinity for tricyclic psychotropic drugs. Ligand binding causes a conformation change that triggers signaling via guanine nucleotide-binding proteins (G proteins) and modulates the activity of downstream effectors. HTR6 is coupled to G(s) G alpha proteins and mediates activation of adenylate cyclase activity. Controls pyramidal neurons migration during corticogenesis, through the regulation of CDK5 activity. Is an activator of mTOR signaling. The sequence is that of 5-hydroxytryptamine receptor 6 (Htr6) from Rattus norvegicus (Rat).